The primary structure comprises 262 residues: MSLIHSTAIVDPKAQLDTSVEVGAYSVIGPHVKIDAGSKIGPHVVVEGHTTIGRDNTIFQFASIGAAPQDKKYAGEPTQLSIGDRNTIREFVTINLGTTQDANITRLGSDNWIMAYVHIAHDCQLGDNIILANNATLAGHVHLEDWVFLGGFTSVHQFCRIGAHAMTAFTAAVSQDIPPFVTAAGNRAVPAGINSEGLKRRGFSSEQIMAIKRGYKIIYRSNLPLEEAKAALLAEENKSSDAAPYLRQLRTFIETSPRGIIR.

This sequence belongs to the transferase hexapeptide repeat family. LpxA subfamily. In terms of assembly, homotrimer.

The protein resides in the cytoplasm. It carries out the reaction a (3R)-hydroxyacyl-[ACP] + UDP-N-acetyl-alpha-D-glucosamine = a UDP-3-O-[(3R)-3-hydroxyacyl]-N-acetyl-alpha-D-glucosamine + holo-[ACP]. Its pathway is glycolipid biosynthesis; lipid IV(A) biosynthesis; lipid IV(A) from (3R)-3-hydroxytetradecanoyl-[acyl-carrier-protein] and UDP-N-acetyl-alpha-D-glucosamine: step 1/6. Functionally, involved in the biosynthesis of lipid A, a phosphorylated glycolipid that anchors the lipopolysaccharide to the outer membrane of the cell. This is Acyl-[acyl-carrier-protein]--UDP-N-acetylglucosamine O-acyltransferase from Herminiimonas arsenicoxydans.